The sequence spans 119 residues: Large ribosomal subunit protein bL20 (119 aa).

It belongs to the bacterial ribosomal protein bL20 family.

In terms of biological role, binds directly to 23S ribosomal RNA and is necessary for the in vitro assembly process of the 50S ribosomal subunit. It is not involved in the protein synthesizing functions of that subunit. In Treponema denticola (strain ATCC 35405 / DSM 14222 / CIP 103919 / JCM 8153 / KCTC 15104), this protein is Large ribosomal subunit protein bL20.